The sequence spans 569 residues: Urease subunit alpha (569 aa).

The region spanning 132 to 569 (GGVDTHIHFI…VPLGQRYFLF (438 aa)) is the Urease domain. Ni(2+) contacts are provided by histidine 137, histidine 139, and lysine 220. The residue at position 220 (lysine 220) is an N6-carboxylysine. Histidine 222 is a substrate binding site. Residues histidine 249 and histidine 275 each coordinate Ni(2+). The Proton donor role is filled by histidine 323. Aspartate 363 serves as a coordination point for Ni(2+).

Belongs to the metallo-dependent hydrolases superfamily. Urease alpha subunit family. Heterotrimer of UreA (gamma), UreB (beta) and UreC (alpha) subunits. Three heterotrimers associate to form the active enzyme. Requires Ni cation as cofactor. In terms of processing, carboxylation allows a single lysine to coordinate two nickel ions.

Its subcellular location is the cytoplasm. The enzyme catalyses urea + 2 H2O + H(+) = hydrogencarbonate + 2 NH4(+). Its pathway is nitrogen metabolism; urea degradation; CO(2) and NH(3) from urea (urease route): step 1/1. This is Urease subunit alpha from Bacillus subtilis (strain 168).